A 306-amino-acid polypeptide reads, in one-letter code: UDP-N-acetylenolpyruvoylglucosamine reductase (306 aa).

Positions 34–199 (KSGGAAEWLF…VAATFRGHAE (166 aa)) constitute an FAD-binding PCMH-type domain. R179 is an active-site residue. The segment at 215-234 (REASQPLRSRTGGSTFKNPQ) is disordered. Residues 220–232 (PLRSRTGGSTFKN) are compositionally biased toward polar residues. S228 functions as the Proton donor in the catalytic mechanism. E298 is a catalytic residue.

It belongs to the MurB family. FAD is required as a cofactor.

It localises to the cytoplasm. The catalysed reaction is UDP-N-acetyl-alpha-D-muramate + NADP(+) = UDP-N-acetyl-3-O-(1-carboxyvinyl)-alpha-D-glucosamine + NADPH + H(+). The protein operates within cell wall biogenesis; peptidoglycan biosynthesis. Functionally, cell wall formation. The polypeptide is UDP-N-acetylenolpyruvoylglucosamine reductase (Rhizorhabdus wittichii (strain DSM 6014 / CCUG 31198 / JCM 15750 / NBRC 105917 / EY 4224 / RW1) (Sphingomonas wittichii)).